A 248-amino-acid polypeptide reads, in one-letter code: ATP synthase subunit a (248 aa).

Helical transmembrane passes span 31–51 (GQVLIASWIAIALILTVVILG), 90–110 (VPYVGTLFLFIFVSNWMGNLF), 129–149 (INTTAGLALLTSIMYFVAGIS), 195–215 (VIAVLVLLVPLFIPVPVMVLF), and 216–236 (LFTGAIQALIFSTLSAAYIGE).

The protein belongs to the ATPase A chain family. F-type ATPases have 2 components, CF(1) - the catalytic core - and CF(0) - the membrane proton channel. CF(1) has five subunits: alpha(3), beta(3), gamma(1), delta(1), epsilon(1). CF(0) has four main subunits: a, b, b' and c.

Its subcellular location is the cellular thylakoid membrane. Key component of the proton channel; it plays a direct role in the translocation of protons across the membrane. This is ATP synthase subunit a from Synechococcus sp. (strain JA-2-3B'a(2-13)) (Cyanobacteria bacterium Yellowstone B-Prime).